Consider the following 160-residue polypeptide: UPF0262 protein Mmar10_1128 (160 aa).

This sequence belongs to the UPF0262 family.

The polypeptide is UPF0262 protein Mmar10_1128 (Maricaulis maris (strain MCS10) (Caulobacter maris)).